A 145-amino-acid chain; its full sequence is Photosystem I reaction center subunit XI (145 aa).

Transmembrane regions (helical) follow at residues 48-68 (LEIGMAHGYFLIGPFYILGPL), 75-95 (LLVGLFSAFGLIIILTLALTI), and 125-145 (IGALGGASVAYLVLNNISFFA).

It belongs to the PsaL family.

It localises to the plastid. The protein localises to the chloroplast thylakoid membrane. This Isochrysis galbana (Marine planktonic alga) protein is Photosystem I reaction center subunit XI.